The chain runs to 370 residues: Flagellar P-ring protein (370 aa).

The first 28 residues, 1–28, serve as a signal peptide directing secretion; that stretch reads MTFFTRCFRRGALLFLLAVLLLPSPAQA.

This sequence belongs to the FlgI family. In terms of assembly, the basal body constitutes a major portion of the flagellar organelle and consists of four rings (L,P,S, and M) mounted on a central rod.

Its subcellular location is the periplasm. It is found in the bacterial flagellum basal body. Its function is as follows. Assembles around the rod to form the L-ring and probably protects the motor/basal body from shearing forces during rotation. The chain is Flagellar P-ring protein from Oleidesulfovibrio alaskensis (strain ATCC BAA-1058 / DSM 17464 / G20) (Desulfovibrio alaskensis).